Reading from the N-terminus, the 187-residue chain is UPF0340 protein SGO_0411 (187 aa).

The protein belongs to the UPF0340 family.

In Streptococcus gordonii (strain Challis / ATCC 35105 / BCRC 15272 / CH1 / DL1 / V288), this protein is UPF0340 protein SGO_0411.